Reading from the N-terminus, the 126-residue chain is MARVAGVDLPREKRIEIALTYIYGIGLTRSKEVLAQTGISADTRVKNLTEAEQSTLRDAIEKTFKVEGDLRSEVGQNIKRLMDIGAYRGLRHRRGLPVRGQRTKTNARTRKGPKKTVAGKKKATRK.

A disordered region spans residues 92–126 (HRRGLPVRGQRTKTNARTRKGPKKTVAGKKKATRK).

The protein belongs to the universal ribosomal protein uS13 family. As to quaternary structure, part of the 30S ribosomal subunit. Forms a loose heterodimer with protein S19. Forms two bridges to the 50S subunit in the 70S ribosome.

Functionally, located at the top of the head of the 30S subunit, it contacts several helices of the 16S rRNA. In the 70S ribosome it contacts the 23S rRNA (bridge B1a) and protein L5 of the 50S subunit (bridge B1b), connecting the 2 subunits; these bridges are implicated in subunit movement. Contacts the tRNAs in the A and P-sites. The protein is Small ribosomal subunit protein uS13 of Deinococcus deserti (strain DSM 17065 / CIP 109153 / LMG 22923 / VCD115).